Consider the following 363-residue polypeptide: Molybdenum import ATP-binding protein ModC (363 aa).

The ABC transporter domain occupies 1–230 (MISARFSGRQ…PNLPLIHRPD (230 aa)). ATP is bound at residue 31-38 (GPSGCGKT). One can recognise a Mop domain in the interval 289-359 (DTTILNALPA…LKAMALSAPA (71 aa)).

This sequence belongs to the ABC transporter superfamily. Molybdate importer (TC 3.A.1.8) family. In terms of assembly, the complex is composed of two ATP-binding proteins (ModC), two transmembrane proteins (ModB) and a solute-binding protein (ModA).

It localises to the cell inner membrane. The catalysed reaction is molybdate(out) + ATP + H2O = molybdate(in) + ADP + phosphate + H(+). Its function is as follows. Part of the ABC transporter complex ModABC involved in molybdenum import. Responsible for energy coupling to the transport system. The sequence is that of Molybdenum import ATP-binding protein ModC from Rhodobacter capsulatus (Rhodopseudomonas capsulata).